A 307-amino-acid polypeptide reads, in one-letter code: MPKISVIGAGNVGATLAQRLIEKDFADVVMLDVVEGIPQGKALDISQSASVLGFRHTITGSNDYAQTAGSEIVVITAGIARKPGMTREELLAINQKIMTDVVSNCLKYSPEATLVVVSNPVDTMTYLAWKLSGLPRKRVVGLSGVLDGGRLATFVARELGVNPSAVSPCVMGEHGGSMVVMSRFTLVNGKPLSELVSPEKADELAKRAVNGGAEIVAFLKTGSAFYAPSASVAAMVEAIFLGSGKVMNCAAVLDGEYGLRNIVLGVPVKLGKGGIKEIITLPLDGQENARLQASAEMVKVQIASLSL.

NAD(+)-binding positions include 8 to 13 and Asp-32; that span reads GAGNVG. 2 residues coordinate substrate: Arg-81 and Arg-87. Residues Asn-94 and 117 to 119 each bind NAD(+); that span reads VSN. Substrate-binding residues include Asn-119 and Arg-150. Residue His-174 is the Proton acceptor of the active site.

This sequence belongs to the LDH/MDH superfamily. MDH type 3 family.

The enzyme catalyses (S)-malate + NAD(+) = oxaloacetate + NADH + H(+). Functionally, catalyzes the reversible oxidation of malate to oxaloacetate. The sequence is that of Malate dehydrogenase from Dehalococcoides mccartyi (strain CBDB1).